The primary structure comprises 43 residues: uncharacterized protein (43 aa).

Belongs to the ELIP/psbS family.

The protein localises to the plastid. It is found in the chloroplast. Functionally, possible role in chlorophyll and/or carotenoid binding. This is an uncharacterized protein from Cyanidium caldarium (Red alga).